The sequence spans 532 residues: SET and MYND domain-containing protein DDB_G0288495 (532 aa).

Residues 25 to 448 (PWIEVKSVSE…ENQELLITYI (424 aa)) enclose the SET domain. An MYND-type; degenerate zinc finger spans residues 70 to 116 (CTTCFKILLESNRHNFQTCPSCFQVNYCSNYCKQYSKIETKHTELEC). A coiled-coil region spans residues 199–240 (INSKNNNEFENEEEEEEEQEQKGEGEQEENENNENNEKVKKK). The disordered stretch occupies residues 204–234 (NNEFENEEEEEEEQEQKGEGEQEENENNENN). Residues 207 to 217 (FENEEEEEEEQ) are compositionally biased toward acidic residues.

It belongs to the class V-like SAM-binding methyltransferase superfamily.

In terms of biological role, probable methyltransferase. The protein is SET and MYND domain-containing protein DDB_G0288495 of Dictyostelium discoideum (Social amoeba).